Reading from the N-terminus, the 350-residue chain is Biotin synthase (350 aa).

Positions 63 to 281 (GDIELATLLS…IAVARITMPK (219 aa)) constitute a Radical SAM core domain. [4Fe-4S] cluster is bound by residues Cys78, Cys82, and Cys85. [2Fe-2S] cluster contacts are provided by Cys122, Cys153, Cys213, and Arg285.

Belongs to the radical SAM superfamily. Biotin synthase family. In terms of assembly, homodimer. It depends on [4Fe-4S] cluster as a cofactor. [2Fe-2S] cluster serves as cofactor.

It catalyses the reaction (4R,5S)-dethiobiotin + (sulfur carrier)-SH + 2 reduced [2Fe-2S]-[ferredoxin] + 2 S-adenosyl-L-methionine = (sulfur carrier)-H + biotin + 2 5'-deoxyadenosine + 2 L-methionine + 2 oxidized [2Fe-2S]-[ferredoxin]. It participates in cofactor biosynthesis; biotin biosynthesis; biotin from 7,8-diaminononanoate: step 2/2. Its function is as follows. Catalyzes the conversion of dethiobiotin (DTB) to biotin by the insertion of a sulfur atom into dethiobiotin via a radical-based mechanism. The chain is Biotin synthase from Acidovorax ebreus (strain TPSY) (Diaphorobacter sp. (strain TPSY)).